The primary structure comprises 173 residues: GTP-dependent dephospho-CoA kinase (173 aa).

Asp-52, Val-53, Val-54, Asp-71, Lys-73, and Asp-122 together coordinate GTP.

Belongs to the GTP-dependent DPCK family.

The catalysed reaction is 3'-dephospho-CoA + GTP = GDP + CoA + H(+). It participates in cofactor biosynthesis; coenzyme A biosynthesis. Catalyzes the GTP-dependent phosphorylation of the 3'-hydroxyl group of dephosphocoenzyme A to form coenzyme A (CoA). The protein is GTP-dependent dephospho-CoA kinase of Metallosphaera sedula (strain ATCC 51363 / DSM 5348 / JCM 9185 / NBRC 15509 / TH2).